We begin with the raw amino-acid sequence, 397 residues long: MQKKTLSDVAIQGKRVLMRVDFNVPIDEEKNITDDKRIVEALPSIKKIIDGGGRLILMSHLGRPKGKVNAEFSLAPVAHRLSELLDTPVAMAKDCIGTEVMQAALALQDGEVMLLENLRFHAEEEANNPDFAKELASLGEIFVNDAFGTAHRAHASTEGITHYVPVAVAGYLIEKELNYLGKALDNPERPFVAILGGSKISGKIDVLENLFTKVDTVLIGGAMVFTFFKAQGLNVGNSLVEDNKLDLAQALLKQAADKGINLLLPDDVLVAATISSDASSHVEAVNSMSDGMIGVDIGPKTIEKYRNEILAARTVLWNGPMGVFEIDNFAEGTFAIAKALAEATSSGAITIVGGGDSAAAIAKAALSDSITHISTGGGASLEFLEGKALPGIEALND.

Substrate is bound by residues 21–23 (DFN), Arg-37, 60–63 (HLGR), Arg-119, and Arg-152. ATP is bound by residues Lys-203, Gly-294, Glu-325, and 354-357 (GGDS).

This sequence belongs to the phosphoglycerate kinase family. As to quaternary structure, monomer.

Its subcellular location is the cytoplasm. It carries out the reaction (2R)-3-phosphoglycerate + ATP = (2R)-3-phospho-glyceroyl phosphate + ADP. It participates in carbohydrate degradation; glycolysis; pyruvate from D-glyceraldehyde 3-phosphate: step 2/5. This is Phosphoglycerate kinase from Chlorobium phaeobacteroides (strain DSM 266 / SMG 266 / 2430).